The following is a 314-amino-acid chain: Nitrilase 2 (314 aa).

Residues 7 to 269 (VTLGVAQAAP…ETLITARVST (263 aa)) form the CN hydrolase domain. Residue E47 is the Proton acceptor of the active site. The Proton donor role is filled by K132. C166 acts as the Nucleophile in catalysis.

This sequence belongs to the carbon-nitrogen hydrolase superfamily. Nitrilase family.

It catalyses the reaction a nitrile + 2 H2O = a carboxylate + NH4(+). Functionally, nitrilases catalyze the mild hydrolytic conversion of organonitriles directly to the corresponding carboxylic acids. Catalyzes the production of aryllactic acid derivatives. Mediates the hydrolysis of cyanohydrin to (S)-phenyllactic acid. The chain is Nitrilase 2 from Unknown prokaryotic organism.